A 226-amino-acid polypeptide reads, in one-letter code: MYSIKCDDNKAMPRERLMRLGAESLSNQELLAILLRTGNKEKHVLELSSYLLSHLDSLADFKKMSLQELQHLAGIGKVKAIEIKAMIELVSRILAIDKTLTDSVLTSVQVAEKMMAALGDKKQEHLVVLYLDNQNRIIEEKTIFIGTVRRSLAEPREILYYACKNMATSLIVIHNHPSGNIEPSSNDYCFTEKIKRSCEDLGIICLDHIIVSYKDYYSFREKSTLF.

The MPN domain occupies 103–225 (SVLTSVQVAE…YYSFREKSTL (123 aa)). The Zn(2+) site is built by His174, His176, and Asp187. The short motif at 174-187 (HNHPSGNIEPSSND) is the JAMM motif element.

It belongs to the UPF0758 family.

The chain is UPF0758 protein M6_Spy0838 from Streptococcus pyogenes serotype M6 (strain ATCC BAA-946 / MGAS10394).